We begin with the raw amino-acid sequence, 808 residues long: Auxin response factor 4 (808 aa).

The span at 1–13 (MPPAAMAPPPPPQ) shows a compositional bias: pro residues. The tract at residues 1-20 (MPPAAMAPPPPPQGSSTGDP) is disordered. Residues 129 to 231 (FCKTLTASDT…ELRVGVRRAM (103 aa)) constitute a DNA-binding region (TF-B3). Residues 342-352 (PSTIPRPDRVS) are compositionally biased toward basic and acidic residues. 3 disordered regions span residues 342-433 (PSTI…DSDV), 661-691 (TAGTATENEKSGQQAQQSSKDVQSKTQVAST), and 778-808 (QKMNSKSNAPRKDDSSENEKGHLPMPNKSDN). The span at 402–432 (AQAQRSQNSTVLQGQEQMTLRSNLTESNDSD) shows a compositional bias: polar residues. The PB1 domain occupies 692–785 (RSCTKVHKQG…EVQKMNSKSN (94 aa)). Over residues 787 to 799 (PRKDDSSENEKGH) the composition is skewed to basic and acidic residues.

This sequence belongs to the ARF family. In terms of assembly, homodimers and heterodimers. Expressed in roots, culms, leaves and young panicles.

It is found in the nucleus. Auxin response factors (ARFs) are transcriptional factors that bind specifically to the DNA sequence 5'-TGTCTC-3' found in the auxin-responsive promoter elements (AuxREs). The sequence is that of Auxin response factor 4 (ARF4) from Oryza sativa subsp. japonica (Rice).